We begin with the raw amino-acid sequence, 157 residues long: Transcriptional repressor NrdR (157 aa).

A zinc finger spans residues 3 to 34; sequence CPFCGHMESQVKDSRPSEDGAAIRRRRLCPEC. In terms of domain architecture, ATP-cone spans 49–139; the sequence is LTIVKRSGRR…VYRDFRETSD (91 aa).

The protein belongs to the NrdR family. Requires Zn(2+) as cofactor.

Functionally, negatively regulates transcription of bacterial ribonucleotide reductase nrd genes and operons by binding to NrdR-boxes. This is Transcriptional repressor NrdR from Caulobacter sp. (strain K31).